The sequence spans 216 residues: Adenylate kinase (216 aa).

13–18 (GAGKGT) contacts ATP. The tract at residues 33–66 (TTGDALRANKTKDITHLDVEYDTPGAYMDAGELV) is NMP. AMP-binding positions include Thr-34, Arg-39, 64 to 66 (ELV), 89 to 92 (GYPR), and Gln-96. The segment at 125 to 162 (GRRVCEDCGATFHVSFNQPETEGVCDACGGSLYQREDD) is LID. Arg-126 is an ATP binding site. Residues Cys-129 and Cys-132 each contribute to the Zn(2+) site. ATP is bound at residue 135–136 (TF). Zn(2+)-binding residues include Cys-149 and Cys-152. AMP contacts are provided by Arg-159 and Arg-170. Arg-198 is an ATP binding site.

The protein belongs to the adenylate kinase family. In terms of assembly, monomer.

Its subcellular location is the cytoplasm. The catalysed reaction is AMP + ATP = 2 ADP. Its pathway is purine metabolism; AMP biosynthesis via salvage pathway; AMP from ADP: step 1/1. Its function is as follows. Catalyzes the reversible transfer of the terminal phosphate group between ATP and AMP. Plays an important role in cellular energy homeostasis and in adenine nucleotide metabolism. This is Adenylate kinase from Halobacterium salinarum (strain ATCC 700922 / JCM 11081 / NRC-1) (Halobacterium halobium).